Consider the following 100-residue polypeptide: Co-chaperonin GroES (100 aa).

This sequence belongs to the GroES chaperonin family. Heptamer of 7 subunits arranged in a ring. Interacts with the chaperonin GroEL.

It is found in the cytoplasm. Its function is as follows. Together with the chaperonin GroEL, plays an essential role in assisting protein folding. The GroEL-GroES system forms a nano-cage that allows encapsulation of the non-native substrate proteins and provides a physical environment optimized to promote and accelerate protein folding. GroES binds to the apical surface of the GroEL ring, thereby capping the opening of the GroEL channel. In Mycobacterium marinum (strain ATCC BAA-535 / M), this protein is Co-chaperonin GroES.